A 95-amino-acid chain; its full sequence is MAFKFNAEVRTAQGKGASRRLRHNGQIPAIVYGGSEEPVSIILNHDELNNAQAHESFYSEVITLVIGGKEVAVKVQAMQRHPFKPKLVHIDFKRA.

The protein belongs to the bacterial ribosomal protein bL25 family. As to quaternary structure, part of the 50S ribosomal subunit; part of the 5S rRNA/L5/L18/L25 subcomplex. Contacts the 5S rRNA. Binds to the 5S rRNA independently of L5 and L18.

Its function is as follows. This is one of the proteins that binds to the 5S RNA in the ribosome where it forms part of the central protuberance. The polypeptide is Large ribosomal subunit protein bL25 (Haemophilus influenzae (strain PittGG)).